Reading from the N-terminus, the 318-residue chain is Protoheme IX farnesyltransferase (318 aa).

9 helical membrane-spanning segments follow: residues I27–G47, P52–I72, L103–W123, L124–L144, I152–G172, W179–L199, I225–G245, I248–L268, and A288–A308.

Belongs to the UbiA prenyltransferase family. Protoheme IX farnesyltransferase subfamily. Interacts with CtaA.

The protein resides in the cell inner membrane. It carries out the reaction heme b + (2E,6E)-farnesyl diphosphate + H2O = Fe(II)-heme o + diphosphate. Its pathway is porphyrin-containing compound metabolism; heme O biosynthesis; heme O from protoheme: step 1/1. Its function is as follows. Converts heme B (protoheme IX) to heme O by substitution of the vinyl group on carbon 2 of heme B porphyrin ring with a hydroxyethyl farnesyl side group. The chain is Protoheme IX farnesyltransferase from Hyphomonas neptunium (strain ATCC 15444).